Reading from the N-terminus, the 1159-residue chain is WASH complex subunit 5 (1159 aa).

This sequence belongs to the strumpellin family. Component of the WASH complex.

It localises to the early endosome. Its function is as follows. Acts at least in part as component of the WASH complex which seems to regulate washc1 nucleation-promoting factor (NPF) activity and is required for its membrane targeting during endosomal sorting. This is WASH complex subunit 5 from Danio rerio (Zebrafish).